The primary structure comprises 652 residues: tRNA 5-methylaminomethyl-2-thiouridine biosynthesis bifunctional protein MnmC (652 aa).

Positions 1–227 (MLSWKNDLTP…KREMLTGKYS (227 aa)) are tRNA (mnm(5)s(2)U34)-methyltransferase. The FAD-dependent cmnm(5)s(2)U34 oxidoreductase stretch occupies residues 259 to 652 (IGAGIAGSTL…ARFLYRRIRK (394 aa)).

This sequence in the N-terminal section; belongs to the methyltransferase superfamily. tRNA (mnm(5)s(2)U34)-methyltransferase family. The protein in the C-terminal section; belongs to the DAO family. FAD is required as a cofactor.

It is found in the cytoplasm. The enzyme catalyses 5-aminomethyl-2-thiouridine(34) in tRNA + S-adenosyl-L-methionine = 5-methylaminomethyl-2-thiouridine(34) in tRNA + S-adenosyl-L-homocysteine + H(+). In terms of biological role, catalyzes the last two steps in the biosynthesis of 5-methylaminomethyl-2-thiouridine (mnm(5)s(2)U) at the wobble position (U34) in tRNA. Catalyzes the FAD-dependent demodification of cmnm(5)s(2)U34 to nm(5)s(2)U34, followed by the transfer of a methyl group from S-adenosyl-L-methionine to nm(5)s(2)U34, to form mnm(5)s(2)U34. The protein is tRNA 5-methylaminomethyl-2-thiouridine biosynthesis bifunctional protein MnmC of Leptospira borgpetersenii serovar Hardjo-bovis (strain JB197).